The following is a 307-amino-acid chain: MQSANLSSAKSFRNIGLIGRPDKISVVETLCLIHDHLRGLGLHVIFDQETAELVPYTNVQTASRSLLGEVVDLVIVVGGDGSLLHAARALVRHHTPVIGINRGRLGFLTDIKPADALFKLDQVLKGHFQLDRRFLLEMEVRTKGETLYDAIALNDVVLHSGKSVHMIDFELQIDGQYVYRQHSDGLIVSTPTGSTAYALSGGGPILHPSMDAIALVPMHPHTLSSRPIVVGGQSEIKLTIRENRVLPMVSADGQHSVSLNVGDCVHIRKHPFKLNLLHPPGYDFYMACRTKLGWNQDFDLIKEQDDS.

Asp-80 serves as the catalytic Proton acceptor. NAD(+) is bound by residues 80–81 (DG), His-85, 154–155 (ND), His-165, His-182, Asp-184, 195–200 (TAYALS), and Gln-254.

This sequence belongs to the NAD kinase family. The cofactor is a divalent metal cation.

The protein localises to the cytoplasm. The enzyme catalyses NAD(+) + ATP = ADP + NADP(+) + H(+). Involved in the regulation of the intracellular balance of NAD and NADP, and is a key enzyme in the biosynthesis of NADP. Catalyzes specifically the phosphorylation on 2'-hydroxyl of the adenosine moiety of NAD to yield NADP. In Acinetobacter baylyi (strain ATCC 33305 / BD413 / ADP1), this protein is NAD kinase.